Reading from the N-terminus, the 582-residue chain is Potassium-transporting ATPase potassium-binding subunit (582 aa).

The next 11 membrane-spanning stretches (helical) occupy residues 6 to 26 (LVQL…LGLY), 65 to 85 (IYAL…YVLE), 87 to 107 (LQGG…FVAV), 136 to 156 (GLAV…VALI), 178 to 198 (VLYI…WQGV), 277 to 297 (LEML…GVMI), 304 to 324 (LAIL…TLAA), 402 to 422 (GLYG…LMVG), 441 to 461 (ALVI…AAVI), 505 to 525 (IAGA…VLAL), and 546 to 566 (GGIF…LTFV).

This sequence belongs to the KdpA family. As to quaternary structure, the system is composed of three essential subunits: KdpA, KdpB and KdpC.

It is found in the cell inner membrane. In terms of biological role, part of the high-affinity ATP-driven potassium transport (or Kdp) system, which catalyzes the hydrolysis of ATP coupled with the electrogenic transport of potassium into the cytoplasm. This subunit binds the periplasmic potassium ions and delivers the ions to the membrane domain of KdpB through an intramembrane tunnel. In Solidesulfovibrio magneticus (strain ATCC 700980 / DSM 13731 / RS-1) (Desulfovibrio magneticus), this protein is Potassium-transporting ATPase potassium-binding subunit.